The following is a 117-amino-acid chain: MSRDFSRTVRVADQIQRELALLIQNEIMDPRVGMVTLTGVEVTRDYAYAKVFYTTLGGDENIQLVEEGLKHAAGFLRSQLAGKIRLRVVPQLQFVYDESVERGMKLSRLIDEAVGKA.

The protein belongs to the RbfA family. In terms of assembly, monomer. Binds 30S ribosomal subunits, but not 50S ribosomal subunits or 70S ribosomes.

Its subcellular location is the cytoplasm. Functionally, one of several proteins that assist in the late maturation steps of the functional core of the 30S ribosomal subunit. Associates with free 30S ribosomal subunits (but not with 30S subunits that are part of 70S ribosomes or polysomes). Required for efficient processing of 16S rRNA. May interact with the 5'-terminal helix region of 16S rRNA. The chain is Ribosome-binding factor A from Nitrosomonas europaea (strain ATCC 19718 / CIP 103999 / KCTC 2705 / NBRC 14298).